An 847-amino-acid polypeptide reads, in one-letter code: Ras GTPase-activating protein 2 (847 aa).

Residues methionine 1–alanine 21 show a composition bias toward low complexity. The segment at methionine 1–arginine 31 is disordered. Alanine 2 is subject to N-acetylalanine. 2 consecutive C2 domains span residues glycine 19–phenylalanine 137 and valine 148–tyrosine 288. The Ras-GAP domain occupies asparagine 371–isoleucine 588. Serine 554 carries the phosphoserine modification. A PH domain is found at valine 603–arginine 704. The Btk-type zinc-finger motif lies at asparagine 706–glycine 742. Histidine 714, cysteine 725, cysteine 726, and cysteine 736 together coordinate Zn(2+). Residues aspartate 819–serine 847 are disordered.

It is found in the cell membrane. Its function is as follows. Inhibitory regulator of the Ras-cyclic AMP pathway. Binds inositol tetrakisphosphate (IP4) and phospholipids. This chain is Ras GTPase-activating protein 2 (Rasa2), found in Mus musculus (Mouse).